The chain runs to 124 residues: 14 kDa peptide of ubiquinol-cytochrome c2 oxidoreductase complex (124 aa).

The helical transmembrane segment at leucine 85–phenylalanine 102 threads the bilayer.

It is found in the cell inner membrane. Functionally, component of the ubiquinol-cytochrome c reductase complex (complex III or cytochrome b-c1 complex), which is a respiratory chain that generates an electrochemical potential coupled to ATP synthesis. This is 14 kDa peptide of ubiquinol-cytochrome c2 oxidoreductase complex from Cereibacter sphaeroides (Rhodobacter sphaeroides).